The following is a 330-amino-acid chain: Aspartate--ammonia ligase (330 aa).

This sequence belongs to the class-II aminoacyl-tRNA synthetase family. AsnA subfamily.

It is found in the cytoplasm. It catalyses the reaction L-aspartate + NH4(+) + ATP = L-asparagine + AMP + diphosphate + H(+). Its pathway is amino-acid biosynthesis; L-asparagine biosynthesis; L-asparagine from L-aspartate (ammonia route): step 1/1. The chain is Aspartate--ammonia ligase from Actinobacillus pleuropneumoniae serotype 7 (strain AP76).